A 322-amino-acid chain; its full sequence is Transcription cofactor vestigial-like protein 2 (322 aa).

Residues 42-61 (ASPGSSASGSSSFSNPTPAS) are compositionally biased toward low complexity. Disordered stretches follow at residues 42–75 (ASPG…ERPP) and 248–322 (PGRL…PTLG). Over residues 62–75 (VKEEEGSPEKERPP) the composition is skewed to basic and acidic residues. Composition is skewed to low complexity over residues 248-258 (PGRLAPASAPA) and 270-283 (GEPA…PGGP). Pro residues predominate over residues 312 to 322 (SAPPALYPTLG).

This sequence belongs to the vestigial family. Interacts with TEFs. Binds to TEAD1/TEF1. In terms of tissue distribution, skeletal muscle specific.

The protein resides in the nucleus. In terms of biological role, may act as a specific coactivator for the mammalian TEFs. May play a role in the development of skeletal muscles. This is Transcription cofactor vestigial-like protein 2 (Vgll2) from Mus musculus (Mouse).